The following is a 376-amino-acid chain: UDP-N-acetylglucosamine--N-acetylmuramyl-(pentapeptide) pyrophosphoryl-undecaprenol N-acetylglucosamine transferase (376 aa).

Residues 12-14, Asn-126, Arg-163, Ser-198, and Gln-296 each bind UDP-N-acetyl-alpha-D-glucosamine; that span reads TAG.

The protein belongs to the glycosyltransferase 28 family. MurG subfamily.

It localises to the cell membrane. The enzyme catalyses di-trans,octa-cis-undecaprenyl diphospho-N-acetyl-alpha-D-muramoyl-L-alanyl-D-glutamyl-meso-2,6-diaminopimeloyl-D-alanyl-D-alanine + UDP-N-acetyl-alpha-D-glucosamine = di-trans,octa-cis-undecaprenyl diphospho-[N-acetyl-alpha-D-glucosaminyl-(1-&gt;4)]-N-acetyl-alpha-D-muramoyl-L-alanyl-D-glutamyl-meso-2,6-diaminopimeloyl-D-alanyl-D-alanine + UDP + H(+). Its pathway is cell wall biogenesis; peptidoglycan biosynthesis. Functionally, cell wall formation. Catalyzes the transfer of a GlcNAc subunit on undecaprenyl-pyrophosphoryl-MurNAc-pentapeptide (lipid intermediate I) to form undecaprenyl-pyrophosphoryl-MurNAc-(pentapeptide)GlcNAc (lipid intermediate II). This is UDP-N-acetylglucosamine--N-acetylmuramyl-(pentapeptide) pyrophosphoryl-undecaprenol N-acetylglucosamine transferase from Frankia casuarinae (strain DSM 45818 / CECT 9043 / HFP020203 / CcI3).